The sequence spans 62 residues: Venom peptide 6 (62 aa).

The signal sequence occupies residues 1–26 (MKSTSVFILFAGIAIMACLQMTGTEA). 3 AXPX repeats span residues 26–29 (AAPS), 30–33 (ASPN), and 40–43 (ADPD). Residues 27-46 (APSASPNPTPVARADPDPEA) constitute a propeptide that is removed on maturation.

The protein belongs to the MCD family. In terms of tissue distribution, expressed by the venom gland.

It is found in the secreted. The protein resides in the target cell membrane. Antimicrobial peptide with strong activity against the fungus B.cinerea (MIC=5 uM) and the Gram-positive bacterium S.aureus (MIC=50 uM), and no activity against C.albicans (MIC&gt;200 uM), and the Gram-negative bacterium E.coli (MIC&gt;200 uM). Shows cytolytic activity against insect cell lines. Has no hemolytic activity against human erythrocytes. In vivo, peptide injection in the vicinity of the head and thorax of lepidopteran larvae induces feeding disorder that lasts one or two days before recovering. This is Venom peptide 6 from Eumenes pomiformis (Potter wasp).